A 293-amino-acid polypeptide reads, in one-letter code: Putative ribose uptake protein RbsU (293 aa).

10 helical membrane passes run 5 to 24, 34 to 51, 58 to 80, 95 to 114, 121 to 138, 153 to 170, 177 to 199, 212 to 234, 241 to 263, and 273 to 292; these read ALLI…TVAS, IIGA…LAVV, TGTN…IITF, TTAF…LGNW, IIGF…RMTV, RAVV…LYSA, IDGL…IYGF, ITWL…LISA, LATG…IYFL, and VITI…TVFI.

This sequence belongs to the GRP transporter (TC 2.A.7.5) family.

The protein resides in the cell membrane. In terms of biological role, could be involved in the uptake of ribose. This is Putative ribose uptake protein RbsU (rbsU) from Staphylococcus aureus (strain COL).